A 635-amino-acid chain; its full sequence is MSHTPTPAAGSGHAPANGHMALVIGAIGVVFGDIGTSPLYTLKEAFSPHYGLTSDHDTVLGVLSLAFWALMITVTLKYVTIIMRADNEGEGGIMALMALTQRTLKQGSRSAYVVGILGIFGASLFFGDGVITPAISVMGAVEGLEIAAPSLHPFIVPITVVVLLVVFMVQRFGTEKVGKVFGPITCLWFLSLGAIGIWNIVDAPEVLKAFNPWWAIRFFMEHGWHGVFILGAVVLAVTGGEALYADMGHFGARPIRHGWYFFVLPMLLLNYLGQGALVLNHPAALKNPFFEAVPSWALYPMIILATLAAVIASQAVITGAYSVARQAMQLGYIPRMLIKHTSRDTIGQIYVPGINWLLMVMVIALVLIFRSSTNLAVAYGISVSMTMLIDTLLLALVARSLWPRWRNWVLPLCVVFFIIELAFVIANGAKLLQGAWFPLALGIVVFTLMRTWRRGRALLREEIRKDGIRIDSFLPGLMLAPPARVPGMAVFLTADPMVVPHALMHNLKHNKVLHERNIFLNVDTLPIPYAPADKRLQIESIGDEFYRVYVRFGFMETPDVPLALMRSCDQGGIHFDPMDTTFFASRETIVASANRGMPIWRDKLFALMHRNAAPATGFFRIPGNRLVELGAQVEI.

The next 12 helical transmembrane spans lie at 20–40, 62–82, 111–131, 149–169, 180–200, 223–243, 259–279, 292–312, 349–369, 377–397, 408–428, and 429–449; these read MALV…SPLY, VLSL…VTII, AYVV…DGVI, PSLH…VFMV, VFGP…IWNI, GWHG…GEAL, WYFF…ALVL, AVPS…AVIA, IYVP…VLIF, VAYG…LALV, WVLP…IANG, and AKLL…FTLM.

It belongs to the HAK/KUP transporter (TC 2.A.72) family.

It localises to the cell inner membrane. The catalysed reaction is K(+)(in) + H(+)(in) = K(+)(out) + H(+)(out). Transport of potassium into the cell. Likely operates as a K(+):H(+) symporter. In Xanthomonas campestris pv. campestris (strain 8004), this protein is Probable potassium transport system protein Kup.